We begin with the raw amino-acid sequence, 828 residues long: Fibroblast growth factor receptor 4 (828 aa).

The signal sequence occupies residues 1–31; sequence MSGSIRRSYTAMQNFPRFLLGVLFVATLSSC. Topologically, residues 32–392 are extracellular; it reads RPRLSEDEAN…AEPAESRYMD (361 aa). Positions 33–127 constitute an Ig-like C2-type 1 domain; the sequence is PRLSEDEANW…GKILRRFSIS (95 aa). A disulfide bridge links Cys-67 with Cys-112. N-linked (GlcNAc...) asparagine glycosylation occurs at Asn-70. The interval 132-156 is disordered; sequence LASGDEEEEEEDDDDEDGRREDTTA. A compositionally biased stretch (acidic residues) spans 135–147; sequence GDEEEEEEDDDDE. 2 consecutive Ig-like C2-type domains span residues 169–259 and 272–372; these read PYWT…LTYT and PILQ…AWLT. A disulfide bridge links Cys-194 with Cys-247. N-linked (GlcNAc...) asparagine glycosylation is found at Asn-244, Asn-281, Asn-313, and Asn-345. Cys-294 and Cys-356 form a disulfide bridge. The helical transmembrane segment at 393–413 threads the bilayer; it reads IIIYTSGFLAVAMAIMIVILC. Residues 414–828 lie on the Cytoplasmic side of the membrane; it reads RMQTPHSKQT…YHNIHSQLGT (415 aa). The region spanning 490–777 is the Protein kinase domain; it reads LVLGKPLGEG…ILTAVSEEYL (288 aa). Residues 496–504 and Lys-526 each bind ATP; that span reads LGEGCFGQV. Catalysis depends on Asp-635, which acts as the Proton acceptor. Phosphotyrosine; by autocatalysis is present on residues Tyr-665, Tyr-666, and Tyr-776.

It belongs to the protein kinase superfamily. Tyr protein kinase family. Fibroblast growth factor receptor subfamily. Ubiquitinated. Subject to proteasomal degradation when not fully glycosylated. Post-translationally, autophosphorylated. Binding of FGF family members together with heparan sulfate proteoglycan or heparin promotes receptor dimerization and autophosphorylation on tyrosine residues. Autophosphorylation occurs in trans between the two FGFR molecules present in the dimer.

It is found in the cell membrane. The protein resides in the endosome. Its subcellular location is the endoplasmic reticulum. It carries out the reaction L-tyrosyl-[protein] + ATP = O-phospho-L-tyrosyl-[protein] + ADP + H(+). Present in an inactive conformation in the absence of bound ligand. Ligand binding leads to dimerization and activation by autophosphorylation on tyrosine residues. Tyrosine-protein kinase that acts as a cell-surface receptor for fibroblast growth factors and plays a role in the regulation of cell proliferation, differentiation and migration, and in regulation of lipid metabolism, bile acid biosynthesis, glucose uptake, vitamin D metabolism and phosphate homeostasis. Required for normal down-regulation of the expression of CYP7A1, the rate-limiting enzyme in bile acid synthesis, in response to FGF19. Phosphorylates PLCG1 and FRS2. Ligand binding leads to the activation of several signaling cascades. Activation of PLCG1 leads to the production of the cellular signaling molecules diacylglycerol and inositol 1,4,5-trisphosphate. Phosphorylation of FRS2 triggers recruitment of GRB2, GAB1, PIK3R1 and SOS1, and mediates activation of RAS, MAPK1/ERK2, MAPK3/ERK1 and the MAP kinase signaling pathway, as well as of the AKT1 signaling pathway. The sequence is that of Fibroblast growth factor receptor 4 (fgfr4) from Xenopus laevis (African clawed frog).